The chain runs to 216 residues: UPF0502 protein PFL_4004 (216 aa).

Belongs to the UPF0502 family.

In Pseudomonas fluorescens (strain ATCC BAA-477 / NRRL B-23932 / Pf-5), this protein is UPF0502 protein PFL_4004.